Consider the following 399-residue polypeptide: 1-deoxy-D-xylulose 5-phosphate reductoisomerase (399 aa).

NADPH-binding residues include Thr13, Gly14, Ser15, Ile16, and Asn127. Position 128 (Lys128) interacts with 1-deoxy-D-xylulose 5-phosphate. Glu129 is a binding site for NADPH. A Mn(2+)-binding site is contributed by Asp153. The 1-deoxy-D-xylulose 5-phosphate site is built by Ser154, Glu155, Ser187, and His210. Glu155 contributes to the Mn(2+) binding site. An NADPH-binding site is contributed by Gly216. Ser223, Asn228, Lys229, and Glu232 together coordinate 1-deoxy-D-xylulose 5-phosphate. Mn(2+) is bound at residue Glu232.

Belongs to the DXR family. Requires Mg(2+) as cofactor. It depends on Mn(2+) as a cofactor.

It carries out the reaction 2-C-methyl-D-erythritol 4-phosphate + NADP(+) = 1-deoxy-D-xylulose 5-phosphate + NADPH + H(+). The protein operates within isoprenoid biosynthesis; isopentenyl diphosphate biosynthesis via DXP pathway; isopentenyl diphosphate from 1-deoxy-D-xylulose 5-phosphate: step 1/6. Catalyzes the NADPH-dependent rearrangement and reduction of 1-deoxy-D-xylulose-5-phosphate (DXP) to 2-C-methyl-D-erythritol 4-phosphate (MEP). The chain is 1-deoxy-D-xylulose 5-phosphate reductoisomerase from Bordetella parapertussis (strain 12822 / ATCC BAA-587 / NCTC 13253).